We begin with the raw amino-acid sequence, 125 residues long: Large ribosomal subunit protein bL12 (125 aa).

Belongs to the bacterial ribosomal protein bL12 family. As to quaternary structure, homodimer. Part of the ribosomal stalk of the 50S ribosomal subunit. Forms a multimeric L10(L12)X complex, where L10 forms an elongated spine to which 2 to 4 L12 dimers bind in a sequential fashion. Binds GTP-bound translation factors.

In terms of biological role, forms part of the ribosomal stalk which helps the ribosome interact with GTP-bound translation factors. Is thus essential for accurate translation. The protein is Large ribosomal subunit protein bL12 of Campylobacter curvus (strain 525.92).